We begin with the raw amino-acid sequence, 178 residues long: Cell wall-binding protein YwsB (178 aa).

The signal sequence occupies residues 1 to 30 (MNKPTKLFSTLALAAGMTAAAAGGAGTIHA). 2 consecutive SH3b domains span residues 47–111 (IDSY…VKAA) and 116–178 (TKTK…HMTK).

Its subcellular location is the secreted. It localises to the cell wall. With respect to regulation, increases in stationary phase in a strain lacking the WprA protease. The protein is Cell wall-binding protein YwsB (ywsB) of Bacillus subtilis (strain 168).